The chain runs to 294 residues: Glycine-rich protein 2 (294 aa).

Residues 1-20 form the signal peptide; the sequence is MKMWFRLATFVTLIIEFAHC. A compositionally biased stretch (low complexity) spans 205–221; the sequence is TGSQTGAAANGTSAGAA. The disordered stretch occupies residues 205–225; sequence TGSQTGAAANGTSAGAAVRGG.

Nacreous layer of shell (at protein level). Expressed primarily in the mantle with highest level in the mantle pallium and lower level in the mantle edge.

The protein resides in the secreted. The sequence is that of Glycine-rich protein 2 from Pinctada maxima (Silver-lipped pearl oyster).